A 187-amino-acid polypeptide reads, in one-letter code: Large ribosomal subunit protein uL10 (187 aa).

It belongs to the universal ribosomal protein uL10 family. In terms of assembly, part of the ribosomal stalk of the 50S ribosomal subunit. The N-terminus interacts with L11 and the large rRNA to form the base of the stalk. The C-terminus forms an elongated spine to which L12 dimers bind in a sequential fashion forming a multimeric L10(L12)X complex.

In terms of biological role, forms part of the ribosomal stalk, playing a central role in the interaction of the ribosome with GTP-bound translation factors. The polypeptide is Large ribosomal subunit protein uL10 (Roseiflexus castenholzii (strain DSM 13941 / HLO8)).